The chain runs to 477 residues: RNA pseudouridine synthase 6, chloroplastic (477 aa).

The N-terminal 52 residues, 1–52 (MPKAAASLASLLPQLWHRPVQPPPFLHRALSSSSPLLRRHRAALHSPAAPLS), are a transit peptide targeting the chloroplast. The 108-residue stretch at 98-205 (EVAVDFISRS…FPRCYEIDWK (108 aa)) folds into the S4 RNA-binding domain. Aspartate 258 is an active-site residue.

The protein belongs to the pseudouridine synthase RluA family.

The protein localises to the plastid. The protein resides in the chloroplast. The enzyme catalyses a uridine in RNA = a pseudouridine in RNA. The protein is RNA pseudouridine synthase 6, chloroplastic of Oryza sativa subsp. japonica (Rice).